Here is a 133-residue protein sequence, read N- to C-terminus: Ubiquitin-like FUBI-ribosomal protein eS30 fusion protein (133 aa).

Residues methionine 1–glycine 74 form the Ubiquitin-like domain. A disordered region spans residues glycine 84–methionine 110. A compositionally biased stretch (basic residues) spans glutamate 97–methionine 110. Residue lysine 125 is modified to N6-succinyllysine.

This sequence in the N-terminal section; belongs to the ubiquitin family. The protein in the C-terminal section; belongs to the eukaryotic ribosomal protein eS30 family. As to quaternary structure, component of the 40S subunit of the ribosome. FUBI is cleaved from ribosomal protein S30 by the deubiquitinase USP36 before the assembly of ribosomal protein S30 into pre-40S ribosomal particles. FUBI removal from ribosomal protein S30 is a crucial event for the final maturation of pre-40S particles.

The protein resides in the cytoplasm. It is found in the nucleus. In terms of biological role, may have pro-apoptotic activity. Component of the 40S subunit of the ribosome. Contributes to the assembly and function of 40S ribosomal subunits. This is Ubiquitin-like FUBI-ribosomal protein eS30 fusion protein from Homo sapiens (Human).